The primary structure comprises 612 residues: Cyclin-dependent kinase G1 (612 aa).

The segment covering 26–54 (SRDVYVRQSGRDDERRQIKRPSDHDLRRN) has biased composition (basic and acidic residues). Disordered regions lie at residues 26 to 60 (SRDV…RHRS) and 239 to 278 (CYSS…EDQD). The 297-residue stretch at 297–593 (FQKLNKINEG…VEDALNHGWF (297 aa)) folds into the Protein kinase domain. Residues 303–311 (INEGTYGIV) and Lys326 contribute to the ATP site. At Tyr308 the chain carries Phosphotyrosine. The Proton acceptor role is filled by Asp426. Ser453 is modified (phosphoserine). Residue Thr459 is modified to Phosphothreonine.

Belongs to the protein kinase superfamily. Ser/Thr protein kinase family. In terms of assembly, forms a complex with CYCL1-1. Associated with the spliceosome. Interacts with RS2Z33. As to expression, expressed in leaves and inflorescences. Lower levels of expression in roots and stems.

The protein localises to the nucleus speckle. It catalyses the reaction L-seryl-[protein] + ATP = O-phospho-L-seryl-[protein] + ADP + H(+). It carries out the reaction L-threonyl-[protein] + ATP = O-phospho-L-threonyl-[protein] + ADP + H(+). Functionally, cyclin-dependent kinase involved in pre-mRNA splicing. Required for the correct splicing of the sixth intron of CALS5 pre-mRNA. May stabilize the binding of U1 snRNP to this rare type of intron with a GC 5'SS. Involved in chromosome pairing and is required for the completion of synapsis in male meiocytes at high ambient temperatures. This Arabidopsis thaliana (Mouse-ear cress) protein is Cyclin-dependent kinase G1 (CDKG1).